A 337-amino-acid chain; its full sequence is Sideroflexin-4 (337 aa).

Ser-2 carries the N-acetylserine modification. 3 helical membrane passes run 111–131 (AAFL…LKGI), 133–153 (SVIL…SING), and 165–185 (SLLM…PQFV). Lys-197 carries the post-translational modification N6-acetyllysine. 2 helical membrane-spanning segments follow: residues 251–271 (ASRI…TYFF) and 293–313 (VLAM…IGQI).

The protein belongs to the sideroflexin family.

It localises to the mitochondrion inner membrane. Functionally, mitochondrial amino-acid transporter. Does not act as a serine transporter: not able to mediate transport of serine into mitochondria. This is Sideroflexin-4 from Homo sapiens (Human).